The following is a 31-amino-acid chain: Cytochrome b6-f complex subunit 6 (31 aa).

Residues 4 to 24 (IISYFGLLLATLTFTIVLFVG) traverse the membrane as a helical segment.

The protein belongs to the PetL family. As to quaternary structure, the 4 large subunits of the cytochrome b6-f complex are cytochrome b6, subunit IV (17 kDa polypeptide, PetD), cytochrome f and the Rieske protein, while the 4 small subunits are PetG, PetL, PetM and PetN. The complex functions as a dimer.

The protein resides in the plastid. Its subcellular location is the chloroplast thylakoid membrane. In terms of biological role, component of the cytochrome b6-f complex, which mediates electron transfer between photosystem II (PSII) and photosystem I (PSI), cyclic electron flow around PSI, and state transitions. PetL is important for photoautotrophic growth as well as for electron transfer efficiency and stability of the cytochrome b6-f complex. In Staurastrum punctulatum (Green alga), this protein is Cytochrome b6-f complex subunit 6.